The primary structure comprises 125 residues: Large ribosomal subunit protein bL12 (125 aa).

Belongs to the bacterial ribosomal protein bL12 family. As to quaternary structure, homodimer. Part of the ribosomal stalk of the 50S ribosomal subunit. Forms a multimeric L10(L12)X complex, where L10 forms an elongated spine to which 2 to 4 L12 dimers bind in a sequential fashion. Binds GTP-bound translation factors.

In terms of biological role, forms part of the ribosomal stalk which helps the ribosome interact with GTP-bound translation factors. Is thus essential for accurate translation. The polypeptide is Large ribosomal subunit protein bL12 (Rickettsia typhi (strain ATCC VR-144 / Wilmington)).